Reading from the N-terminus, the 343-residue chain is Uroporphyrinogen decarboxylase (343 aa).

Residues 23–27 (RQAGR), phenylalanine 42, aspartate 73, tyrosine 150, serine 205, and histidine 322 each bind substrate.

It belongs to the uroporphyrinogen decarboxylase family. As to quaternary structure, homodimer.

Its subcellular location is the cytoplasm. The enzyme catalyses uroporphyrinogen III + 4 H(+) = coproporphyrinogen III + 4 CO2. Its pathway is porphyrin-containing compound metabolism; protoporphyrin-IX biosynthesis; coproporphyrinogen-III from 5-aminolevulinate: step 4/4. Inhibited by N-ethyl-maleimide and phenylglyoxal. In terms of biological role, catalyzes the decarboxylation of four acetate groups of uroporphyrinogen-III to yield coproporphyrinogen-III. This is Uroporphyrinogen decarboxylase (hemE) from Cereibacter sphaeroides (strain ATCC 17023 / DSM 158 / JCM 6121 / CCUG 31486 / LMG 2827 / NBRC 12203 / NCIMB 8253 / ATH 2.4.1.) (Rhodobacter sphaeroides).